Here is a 344-residue protein sequence, read N- to C-terminus: rRNA 2'-O-methyltransferase fibrillarin (344 aa).

Residues 1 to 113 (MGKPGFSPRG…GFKGGKTVTI (113 aa)) are disordered. The segment covering 8–107 (PRGGGGGGGG…RGGGAGGFKG (100 aa)) has biased composition (gly residues). Arg9, Arg23, Arg25, Arg40, Arg42, Arg48, Arg51, Arg58, Arg63, Arg71, Arg77, Arg83, Arg88, Arg93, and Arg98 each carry asymmetric dimethylarginine. S-adenosyl-L-methionine is bound by residues 197-198 (TT), 216-217 (EF), 241-242 (DA), and 261-264 (DVAQ).

This sequence belongs to the methyltransferase superfamily. Fibrillarin family. As to quaternary structure, component of box C/D small nucleolar ribonucleoprotein (snoRNP) particles. It is associated with the U3, U8 and U13 small nuclear RNAs. In terms of processing, by homology to other fibrillarins, some or all of the N-terminal domain arginines are modified to asymmetric dimethylarginine (DMA).

Its subcellular location is the nucleus. It is found in the nucleolus. The enzyme catalyses L-glutaminyl-[histone H2A] + S-adenosyl-L-methionine = N(5)-methyl-L-glutaminyl-[histone H2A] + S-adenosyl-L-homocysteine + H(+). Its function is as follows. S-adenosyl-L-methionine-dependent methyltransferase that has the ability to methylate both RNAs and proteins. Involved in pre-rRNA processing. Utilizes the methyl donor S-adenosyl-L-methionine to catalyze the site-specific 2'-hydroxyl methylation of ribose moieties in pre-ribosomal RNA. Site specificity is provided by a guide RNA that base pairs with the substrate. Methylation occurs at a characteristic distance from the sequence involved in base pairing with the guide RNA. Also acts as a protein methyltransferase by mediating methylation of 'Gln-105' of histone H2A (H2AQ105me), a modification that impairs binding of the FACT complex and is specifically present at 35S ribosomal DNA locus. The protein is rRNA 2'-O-methyltransferase fibrillarin of Drosophila melanogaster (Fruit fly).